The chain runs to 173 residues: dCTP deaminase, dUMP-forming (173 aa).

Residues 93–98, Asp111, 119–121, Gln138, and Tyr151 contribute to the dCTP site; these read RSSTGR and TLE. The active-site Proton donor/acceptor is the Glu121.

This sequence belongs to the dCTP deaminase family. In terms of assembly, homotrimer.

It carries out the reaction dCTP + 2 H2O = dUMP + NH4(+) + diphosphate. Its pathway is pyrimidine metabolism; dUMP biosynthesis; dUMP from dCTP: step 1/1. Functionally, bifunctional enzyme that catalyzes both the deamination of dCTP to dUTP and the hydrolysis of dUTP to dUMP without releasing the toxic dUTP intermediate. This chain is dCTP deaminase, dUMP-forming, found in Clostridium botulinum (strain Alaska E43 / Type E3).